A 216-amino-acid polypeptide reads, in one-letter code: Translation initiation factor 6 (216 aa).

This sequence belongs to the eIF-6 family.

Functionally, binds to the 50S ribosomal subunit and prevents its association with the 30S ribosomal subunit to form the 70S initiation complex. The chain is Translation initiation factor 6 from Thermoplasma acidophilum (strain ATCC 25905 / DSM 1728 / JCM 9062 / NBRC 15155 / AMRC-C165).